The following is a 226-amino-acid chain: uncharacterized protein (226 aa).

Residues 5-25 traverse the membrane as a helical segment; the sequence is IKTVSFAAAAILVVIICTFLI.

It localises to the cell membrane. This is an uncharacterized protein from Bacillus subtilis (strain 168).